A 1073-amino-acid polypeptide reads, in one-letter code: Carbamoyl phosphate synthase large chain (1073 aa).

Residues 2 to 403 form a carboxyphosphate synthetic domain region; the sequence is PKRTDIKSIL…SLQKALRGLE (402 aa). ATP is bound by residues Arg129, Arg169, Gly175, Gly176, Glu208, Leu210, Glu215, Gly241, Ile242, His243, Gln285, and Glu299. The region spanning 133–328 is the ATP-grasp 1 domain; the sequence is DVAMKKIGLE…IAKVAAKLAV (196 aa). Residues Gln285, Glu299, and Asn301 each contribute to the Mg(2+) site. Residues Gln285, Glu299, and Asn301 each coordinate Mn(2+). The oligomerization domain stretch occupies residues 404-553; the sequence is VGATGFDPKV…YSTYEEECEA (150 aa). A carbamoyl phosphate synthetic domain region spans residues 554–936; sequence NPSTDREKIM…AFAKAQLGSN (383 aa). The 192-residue stretch at 679-870 folds into the ATP-grasp 2 domain; the sequence is QHAVERLKLK…LAKVAARVMA (192 aa). Residues Arg715, His754, Leu756, Glu761, Gly786, Val787, His788, Ser789, Gln829, and Glu841 each contribute to the ATP site. Mg(2+)-binding residues include Gln829, Glu841, and Asn843. Residues Gln829, Glu841, and Asn843 each contribute to the Mn(2+) site. Residues 937-1073 form the MGS-like domain; sequence STMKKHGRAL…SVQEMHAQIK (137 aa). The segment at 937-1073 is allosteric domain; the sequence is STMKKHGRAL…SVQEMHAQIK (137 aa).

Belongs to the CarB family. In terms of assembly, composed of two chains; the small (or glutamine) chain promotes the hydrolysis of glutamine to ammonia, which is used by the large (or ammonia) chain to synthesize carbamoyl phosphate. Tetramer of heterodimers (alpha,beta)4. Requires Mg(2+) as cofactor. Mn(2+) is required as a cofactor.

The enzyme catalyses hydrogencarbonate + L-glutamine + 2 ATP + H2O = carbamoyl phosphate + L-glutamate + 2 ADP + phosphate + 2 H(+). The catalysed reaction is hydrogencarbonate + NH4(+) + 2 ATP = carbamoyl phosphate + 2 ADP + phosphate + 2 H(+). It participates in amino-acid biosynthesis; L-arginine biosynthesis; carbamoyl phosphate from bicarbonate: step 1/1. The protein operates within pyrimidine metabolism; UMP biosynthesis via de novo pathway; (S)-dihydroorotate from bicarbonate: step 1/3. Functionally, large subunit of the glutamine-dependent carbamoyl phosphate synthetase (CPSase). CPSase catalyzes the formation of carbamoyl phosphate from the ammonia moiety of glutamine, carbonate, and phosphate donated by ATP, constituting the first step of 2 biosynthetic pathways, one leading to arginine and/or urea and the other to pyrimidine nucleotides. The large subunit (synthetase) binds the substrates ammonia (free or transferred from glutamine from the small subunit), hydrogencarbonate and ATP and carries out an ATP-coupled ligase reaction, activating hydrogencarbonate by forming carboxy phosphate which reacts with ammonia to form carbamoyl phosphate. The sequence is that of Carbamoyl phosphate synthase large chain from Escherichia coli (strain K12).